A 123-amino-acid polypeptide reads, in one-letter code: Small ribosomal subunit protein uS12 (123 aa).

The residue at position 89 (aspartate 89) is a 3-methylthioaspartic acid.

This sequence belongs to the universal ribosomal protein uS12 family. Part of the 30S ribosomal subunit. Contacts proteins S8 and S17. May interact with IF1 in the 30S initiation complex.

In terms of biological role, with S4 and S5 plays an important role in translational accuracy. Its function is as follows. Interacts with and stabilizes bases of the 16S rRNA that are involved in tRNA selection in the A site and with the mRNA backbone. Located at the interface of the 30S and 50S subunits, it traverses the body of the 30S subunit contacting proteins on the other side and probably holding the rRNA structure together. The combined cluster of proteins S8, S12 and S17 appears to hold together the shoulder and platform of the 30S subunit. The polypeptide is Small ribosomal subunit protein uS12 (Nitrobacter winogradskyi (strain ATCC 25391 / DSM 10237 / CIP 104748 / NCIMB 11846 / Nb-255)).